The following is a 424-amino-acid chain: Elongation factor 1-alpha (424 aa).

Residues 5–223 (KPHMNLVIIG…NALQVPAKPV (219 aa)) enclose the tr-type G domain. Residues 14–21 (GHVDHGKS) form a G1 region. 14–21 (GHVDHGKS) provides a ligand contact to GTP. S21 lines the Mg(2+) pocket. A G2 region spans residues 70–74 (GVTID). The interval 91–94 (DAPG) is G3. Residues 91 to 95 (DAPGH) and 148 to 151 (NKMD) contribute to the GTP site. A G4 region spans residues 148 to 151 (NKMD). Residues 187–189 (SGY) form a G5 region.

The protein belongs to the TRAFAC class translation factor GTPase superfamily. Classic translation factor GTPase family. EF-Tu/EF-1A subfamily.

Its subcellular location is the cytoplasm. It catalyses the reaction GTP + H2O = GDP + phosphate + H(+). GTP hydrolase that promotes the GTP-dependent binding of aminoacyl-tRNA to the A-site of ribosomes during protein biosynthesis. In Picrophilus torridus (strain ATCC 700027 / DSM 9790 / JCM 10055 / NBRC 100828 / KAW 2/3), this protein is Elongation factor 1-alpha.